A 111-amino-acid chain; its full sequence is 2Fe-2S ferredoxin (111 aa).

The 103-residue stretch at 2 to 104 (PKIVILPHQD…DLVVEIPRYT (103 aa)) folds into the 2Fe-2S ferredoxin-type domain. Positions 42, 48, 51, and 87 each coordinate [2Fe-2S] cluster.

This sequence belongs to the adrenodoxin/putidaredoxin family. [2Fe-2S] cluster is required as a cofactor.

Ferredoxin are iron-sulfur proteins that transfer electrons in a wide variety of metabolic reactions. Although the function of this ferredoxin is unknown it is probable that it has a role as a cellular electron transfer protein. Involved in the in vivo assembly of the Fe-S clusters in a wide variety of iron-sulfur proteins. The polypeptide is 2Fe-2S ferredoxin (fdx) (Escherichia coli O157:H7).